Reading from the N-terminus, the 364-residue chain is Dihydroorotate dehydrogenase (quinone) (364 aa).

FMN is bound by residues A62 to K66 and T86. Residue K66 participates in substrate binding. N111–F115 is a substrate binding site. Positions 142 and 175 each coordinate FMN. N175 lines the substrate pocket. The active-site Nucleophile is S178. N180 provides a ligand contact to substrate. Residues K216 and T244 each coordinate FMN. Residue N245–T246 participates in substrate binding. FMN contacts are provided by residues G267, G296, and Y317–T318.

The protein belongs to the dihydroorotate dehydrogenase family. Type 2 subfamily. As to quaternary structure, monomer. FMN is required as a cofactor.

It localises to the cell membrane. The catalysed reaction is (S)-dihydroorotate + a quinone = orotate + a quinol. The protein operates within pyrimidine metabolism; UMP biosynthesis via de novo pathway; orotate from (S)-dihydroorotate (quinone route): step 1/1. In terms of biological role, catalyzes the conversion of dihydroorotate to orotate with quinone as electron acceptor. The chain is Dihydroorotate dehydrogenase (quinone) from Anaeromyxobacter sp. (strain K).